Reading from the N-terminus, the 512-residue chain is rRNA N(6)-adenosine-methyltransferase ZCCHC4 (512 aa).

C39, H41, C63, C72, C124, C127, H139, and H142 together coordinate Zn(2+). The GRF-type zinc-finger motif lies at 39–81 (CPHGPTLLFVKVNQGKEETRKFYACSACRDRKDCNFFQWEDEK). S-adenosyl-L-methionine is bound by residues 171-174 (QYLF), R201, D223, 241-242 (NM), and D274. The segment at 335 to 355 (QVDYDNHALYKHGKTGRKQSP) is regulatory loop. 16 residues coordinate Zn(2+): C378, C381, H391, C392, C395, C398, H408, C409, C412, C415, H422, C423, C426, C429, H434, and C436. A DHHC domain is found at 393 to 445 (VHCNSCTSKDGRKWSHCFLCKKCVKPSWIHCNTCNRCALPDHSCLGPKDGCFI). The segment at 441-458 (DGCFICGALDHKRSNCPN) adopts a CCHC-type zinc-finger fold.

This sequence belongs to the ZCCHC4 family. In terms of assembly, interacts with components of the ASC-1 complex TRIP4, ASCC1, ASCC2 and ASCC3. Interact with AHCYL1 and AHCYL2. Interact with YTHDC2.

Its subcellular location is the cytoplasm. It localises to the nucleus. The protein resides in the nucleolus. It catalyses the reaction adenosine(4220) in 28S rRNA + S-adenosyl-L-methionine = N(6)-methyladenosine(4220) in 28S rRNA + S-adenosyl-L-homocysteine + H(+). Functionally, rRNA N6-methyltransferase that specifically methylates the adenine in position 4220 of 28S rRNA. N6-methylation of adenine(4220) in 28S rRNA is required for translation. This chain is rRNA N(6)-adenosine-methyltransferase ZCCHC4, found in Mus musculus (Mouse).